The chain runs to 557 residues: Protein NRT1/ PTR FAMILY 5.10 (557 aa).

2 helical membrane-spanning segments follow: residues 49–67 (FAYYGISSNLITYLTGPLG) and 79–99 (AWSGTASLLPLLGAFVADSFL). Position 104 is a phosphothreonine (threonine 104). Helical transmembrane passes span 105–125 (ILAASALYIVGLGVLTLSAMI), 144–164 (VITFFSALYLVALAQGGHKPC), 186–206 (SFFNWWYFGMCFGTLTTLWVL), 215–235 (WALGFGIPCIAMVVALVVLLL), 320–340 (APIWLTCLVYAVVFAQSPTFF), 365–385 (FISLSIVIFIPIYDRVLIPIA), 401–421 (IGTGIFLSFLAMVVAALVEMK), 443–463 (VWWLVPQYVLFGITDVFAMVG), 479–499 (VGLALYLSIFGIGNFLSSFMI), and 526–546 (YFYWLLACLSFIGLASYLYVA).

The protein belongs to the major facilitator superfamily. Proton-dependent oligopeptide transporter (POT/PTR) (TC 2.A.17) family. Expressed in shoots, roots and stems. Detected in leaves, flowers and siliques.

The protein localises to the membrane. This is Protein NRT1/ PTR FAMILY 5.10 (NPF5.10) from Arabidopsis thaliana (Mouse-ear cress).